The sequence spans 142 residues: UPF0336 protein PPA1896 (142 aa).

Belongs to the UPF0336 family.

The sequence is that of UPF0336 protein PPA1896 from Cutibacterium acnes (strain DSM 16379 / KPA171202) (Propionibacterium acnes).